Consider the following 197-residue polypeptide: MPQDAPAGLAPGFLVAAPALADPNFNGSLVLMAEHHAQGALGFVVNRPGPITVADVLGGLDAGLRERAEGAGRADDPVLVGGPVQPERLWILFRPGPAAPEEGAVALGAGLALGGSRELLEALVRARDPGPYLLLLGYAGWAPLQVEREVGEGAWVPLPLQGDLVFDVPMEKRWETAVRRLGLDPAGFLVGGGGAEA.

This sequence belongs to the UPF0301 (AlgH) family.

This chain is UPF0301 protein A2cp1_4106, found in Anaeromyxobacter dehalogenans (strain 2CP-1 / ATCC BAA-258).